A 327-amino-acid chain; its full sequence is Glycerol-3-phosphate dehydrogenase [NAD(P)+] (327 aa).

NADPH is bound by residues Ser-10, Phe-11, Arg-31, and Lys-108. 3 residues coordinate sn-glycerol 3-phosphate: Lys-108, Gly-136, and Ser-138. Ala-140 is a binding site for NADPH. 5 residues coordinate sn-glycerol 3-phosphate: Lys-191, Asp-246, Ser-256, Arg-257, and Asn-258. Lys-191 serves as the catalytic Proton acceptor. NADPH is bound at residue Arg-257. Residues Leu-281 and Glu-283 each coordinate NADPH.

The protein belongs to the NAD-dependent glycerol-3-phosphate dehydrogenase family.

It is found in the cytoplasm. The catalysed reaction is sn-glycerol 3-phosphate + NAD(+) = dihydroxyacetone phosphate + NADH + H(+). It carries out the reaction sn-glycerol 3-phosphate + NADP(+) = dihydroxyacetone phosphate + NADPH + H(+). Its pathway is membrane lipid metabolism; glycerophospholipid metabolism. Its function is as follows. Catalyzes the reduction of the glycolytic intermediate dihydroxyacetone phosphate (DHAP) to sn-glycerol 3-phosphate (G3P), the key precursor for phospholipid synthesis. The chain is Glycerol-3-phosphate dehydrogenase [NAD(P)+] from Ehrlichia ruminantium (strain Gardel).